The following is a 179-amino-acid chain: Putative 5'(3')-deoxyribonucleotidase (179 aa).

D9 functions as the Nucleophile in the catalytic mechanism. Residues D9, D11, and D135 each coordinate Mg(2+). Catalysis depends on D11, which acts as the Proton donor.

It belongs to the 5'(3')-deoxyribonucleotidase family. Mg(2+) is required as a cofactor.

Its function is as follows. Dephosphorylates the 5' and 2'(3')-phosphates of deoxyribonucleotides. This Staphylococcus epidermidis (strain ATCC 12228 / FDA PCI 1200) protein is Putative 5'(3')-deoxyribonucleotidase.